We begin with the raw amino-acid sequence, 512 residues long: Lysine--tRNA ligase (512 aa).

Residues glutamate 408 and glutamate 415 each contribute to the Mg(2+) site.

This sequence belongs to the class-II aminoacyl-tRNA synthetase family. As to quaternary structure, homodimer. It depends on Mg(2+) as a cofactor.

It localises to the cytoplasm. The enzyme catalyses tRNA(Lys) + L-lysine + ATP = L-lysyl-tRNA(Lys) + AMP + diphosphate. This chain is Lysine--tRNA ligase, found in Prochlorococcus marinus (strain MIT 9301).